A 539-amino-acid polypeptide reads, in one-letter code: Sporozoite-associated protein (539 aa).

Residues N31, N90, N102, N149, and N167 are each glycosylated (N-linked (GlcNAc...) asparagine). Positions 126-153 are disordered; the sequence is LTQSPPPAAAPQSPSPRAILSPRNVSKT. The segment covering 192–215 has biased composition (low complexity); that stretch reads VVAEKSNTPTTPKTTPNGKWTGKN. The tract at residues 192–231 is disordered; sequence VVAEKSNTPTTPKTTPNGKWTGKNANATIETSNTDHTPPS. Positions 216–228 are enriched in polar residues; the sequence is ANATIETSNTDHT. N-linked (GlcNAc...) asparagine glycans are attached at residues N217, N271, and N288. A disordered region spans residues 303 to 355; it reads TLISRAQDDKPGTKGGSDETSSSTAASNERQPMFPNDNDDDDIDQTYCPGVES. Positions 320–332 are enriched in polar residues; that stretch reads DETSSSTAASNER. N-linked (GlcNAc...) asparagine glycosylation is found at N427 and N503.

As to expression, saliva (at protein level). Female salivary gland. Female midgut.

Its subcellular location is the secreted. Binds heparan sulfate proteoglycans present on the mammalian cell surface. Modulates host immune responses at the site of inoculation via decreasing the expression of TNF-alpha/TNF, IL-1beta/IL1B, IFN-gamma/IFNG, IL4, MMP9, TGF-beta and ICAM1. Its function is as follows. (Microbial infection) Interacts with the surface of Plasmodium berghei sporozoites. Promotes Plasmodium berghei transmission to the mouse host. Does not affect Plasmodium berghei sporozoite viability. Functionally, (Microbial infection) Interacts with the surface of Plasmodium falciparum sporozoites. This chain is Sporozoite-associated protein, found in Anopheles gambiae (African malaria mosquito).